An 856-amino-acid polypeptide reads, in one-letter code: Lon protease homolog 2, peroxisomal (856 aa).

Residues 13–222 (LPLLLTHEGV…VTIPLLLRQI (210 aa)) enclose the Lon N-terminal domain. 379–386 (GPPGVGKT) contributes to the ATP binding site. The segment covering 586-608 (GQHREHKSEHLEAPEGEERKESV) has biased composition (basic and acidic residues). Residues 586–614 (GQHREHKSEHLEAPEGEERKESVPEGSKS) are disordered. The 187-residue stretch at 655–841 (LNQPGVAIGL…DEVLNAAFDG (187 aa)) folds into the Lon proteolytic domain. Residues Ser-747 and Lys-790 contribute to the active site. The Microbody targeting signal motif lies at 854-856 (SKL).

The protein belongs to the peptidase S16 family.

Its subcellular location is the peroxisome matrix. The catalysed reaction is Hydrolysis of proteins in presence of ATP.. Functionally, ATP-dependent serine protease that mediates the selective degradation of misfolded and unassembled polypeptides in the peroxisomal matrix. Necessary for type 2 peroxisome targeting signal (PTS2)-containing protein processing and facilitates peroxisome matrix protein import. The sequence is that of Lon protease homolog 2, peroxisomal (lonp2) from Xenopus laevis (African clawed frog).